The following is a 372-amino-acid chain: Glutamate 5-kinase (372 aa).

Lys-14 lines the ATP pocket. Substrate is bound by residues Ser-54, Asp-141, and Asn-153. 173 to 174 (TD) contacts ATP. Residues 280–358 (RGTLVLDDGA…DAIEALLGYV (79 aa)) form the PUA domain.

The protein belongs to the glutamate 5-kinase family.

It localises to the cytoplasm. The enzyme catalyses L-glutamate + ATP = L-glutamyl 5-phosphate + ADP. The protein operates within amino-acid biosynthesis; L-proline biosynthesis; L-glutamate 5-semialdehyde from L-glutamate: step 1/2. Catalyzes the transfer of a phosphate group to glutamate to form L-glutamate 5-phosphate. The protein is Glutamate 5-kinase of Pseudomonas aeruginosa (strain UCBPP-PA14).